Consider the following 487-residue polypeptide: Proline--tRNA ligase (487 aa).

It belongs to the class-II aminoacyl-tRNA synthetase family. ProS type 3 subfamily. In terms of assembly, homodimer.

The protein localises to the cytoplasm. The catalysed reaction is tRNA(Pro) + L-proline + ATP = L-prolyl-tRNA(Pro) + AMP + diphosphate. Catalyzes the attachment of proline to tRNA(Pro) in a two-step reaction: proline is first activated by ATP to form Pro-AMP and then transferred to the acceptor end of tRNA(Pro). The protein is Proline--tRNA ligase of Pyrobaculum calidifontis (strain DSM 21063 / JCM 11548 / VA1).